A 287-amino-acid chain; its full sequence is Urease accessory protein UreD (287 aa).

Belongs to the UreD family. As to quaternary structure, ureD, UreF and UreG form a complex that acts as a GTP-hydrolysis-dependent molecular chaperone, activating the urease apoprotein by helping to assemble the nickel containing metallocenter of UreC. The UreE protein probably delivers the nickel.

It localises to the cytoplasm. In terms of biological role, required for maturation of urease via the functional incorporation of the urease nickel metallocenter. This Aliivibrio fischeri (strain ATCC 700601 / ES114) (Vibrio fischeri) protein is Urease accessory protein UreD.